We begin with the raw amino-acid sequence, 95 residues long: Small ribosomal subunit protein uS17 (95 aa).

This sequence belongs to the universal ribosomal protein uS17 family. As to quaternary structure, part of the 30S ribosomal subunit.

One of the primary rRNA binding proteins, it binds specifically to the 5'-end of 16S ribosomal RNA. In Mesomycoplasma hyopneumoniae (strain 7448) (Mycoplasma hyopneumoniae), this protein is Small ribosomal subunit protein uS17.